Here is a 632-residue protein sequence, read N- to C-terminus: 1-deoxy-D-xylulose-5-phosphate synthase (632 aa).

Thiamine diphosphate contacts are provided by residues His75 and 117–119; that span reads GHA. Residue Asp146 participates in Mg(2+) binding. Residues 147–148, Asn175, and Glu370 contribute to the thiamine diphosphate site; that span reads AA. Asn175 serves as a coordination point for Mg(2+).

It belongs to the transketolase family. DXPS subfamily. Homodimer. Mg(2+) serves as cofactor. Requires thiamine diphosphate as cofactor.

It catalyses the reaction D-glyceraldehyde 3-phosphate + pyruvate + H(+) = 1-deoxy-D-xylulose 5-phosphate + CO2. It participates in metabolic intermediate biosynthesis; 1-deoxy-D-xylulose 5-phosphate biosynthesis; 1-deoxy-D-xylulose 5-phosphate from D-glyceraldehyde 3-phosphate and pyruvate: step 1/1. Functionally, catalyzes the acyloin condensation reaction between C atoms 2 and 3 of pyruvate and glyceraldehyde 3-phosphate to yield 1-deoxy-D-xylulose-5-phosphate (DXP). The chain is 1-deoxy-D-xylulose-5-phosphate synthase from Chlamydia muridarum (strain MoPn / Nigg).